We begin with the raw amino-acid sequence, 280 residues long: Keratin, type I cytoskeletal 47 kDa (280 aa).

Residues 1 to 81 (MSFRSSSSYS…SSSFSSFGGN (81 aa)) form a head region. The interval 82–117 (DKQTMQNLNDRLASYLEKVRALEAANADLELKIREW) is coil 1A. The IF rod domain maps to 82–280 (DKQTMQNLND…RDAELWFNQK (199 aa)). The segment at 118-139 (YEKQKGSGIGAASKDFSKYFEI) is linker 1. Residues 140 to 231 (ISDLRNKILF…KNHEEEMSIA (92 aa)) are coil 1B. A linker 12 region spans residues 232 to 254 (KGSAAGQVTVEMDAAPGVDLNKI). A coil 2 region spans residues 255-280 (LSDMRADYETLAEKNRRDAELWFNQK).

The protein belongs to the intermediate filament family. Heterotetramer of two type I and two type II keratins.

The chain is Keratin, type I cytoskeletal 47 kDa (xk81b1) from Xenopus laevis (African clawed frog).